The sequence spans 440 residues: Xaa-Pro dipeptidase (440 aa).

Mn(2+)-binding residues include D244, D255, H336, E381, and E420.

Belongs to the peptidase M24B family. Bacterial-type prolidase subfamily. Mn(2+) is required as a cofactor.

The catalysed reaction is Xaa-L-Pro dipeptide + H2O = an L-alpha-amino acid + L-proline. In terms of biological role, splits dipeptides with a prolyl residue in the C-terminal position. The chain is Xaa-Pro dipeptidase from Pseudoalteromonas translucida (strain TAC 125).